We begin with the raw amino-acid sequence, 418 residues long: tRNA(Met) cytidine acetate ligase (418 aa).

3 residues coordinate ATP: glycine 95, asparagine 161, and arginine 186.

It belongs to the TmcAL family.

The protein localises to the cytoplasm. It catalyses the reaction cytidine(34) in elongator tRNA(Met) + acetate + ATP = N(4)-acetylcytidine(34) in elongator tRNA(Met) + AMP + diphosphate. Its function is as follows. Catalyzes the formation of N(4)-acetylcytidine (ac(4)C) at the wobble position of elongator tRNA(Met), using acetate and ATP as substrates. First activates an acetate ion to form acetyladenylate (Ac-AMP) and then transfers the acetyl group to tRNA to form ac(4)C34. In Thermotoga maritima (strain ATCC 43589 / DSM 3109 / JCM 10099 / NBRC 100826 / MSB8), this protein is tRNA(Met) cytidine acetate ligase.